Consider the following 477-residue polypeptide: M-phase inducer phosphatase 3 (477 aa).

The disordered stretch occupies residues 1–20; that stretch reads MSAEFFSSKREEGSLASGPS. Residue serine 2 is modified to N-acetylserine. Phosphoserine occurs at positions 20 and 38. Threonine 48 bears the Phosphothreonine; by CDK1 mark. Phosphoserine occurs at positions 58, 62, and 65. Position 68 is a phosphothreonine; by CDK1 (threonine 68). A Phosphoserine; by CDK1 modification is found at serine 123. At serine 130 the chain carries Phosphoserine. Threonine 131 is modified (phosphothreonine). At serine 169 the chain carries Phosphoserine; by CDK1. 2 positions are modified to phosphoserine; by PLK3: serine 192 and serine 199. Serine 218 carries the post-translational modification Phosphoserine; by CDK1. The residue at position 220 (serine 220) is a Phosphoserine; by CHEK1, CHEK2, BRSK1, MAPK14 AND MARK3. The 108-residue stretch at 325-432 folds into the Rhodanese domain; that stretch reads LIEKFYIIDC…FFPEYMELCE (108 aa). Cysteine 381 is an active-site residue. Serine 476 bears the Phosphoserine mark.

This sequence belongs to the MPI phosphatase family. Interacts with MAPK14 and 14-3-3 proteins. When phosphorylated on Ser-130 and/or Thr-131, interacts with PLK1. Interacts with MARK3/C-TAK1. Post-translationally, phosphorylated by CHEK1 and MAPK14 at Ser-220. This phosphorylation creates a binding site for 14-3-3 protein and inhibits the phosphatase. Phosphorylated by PLK4. Phosphorylated by PLK1, leading to activate the phosphatase activity. Phosphorylation by PLK3 at Ser-192 promotes nuclear translocation. Ser-199 is a minor phosphorylation site. Phosphorylation by CDK1 occurs at G2 and G2-M transition and leads to increased activity.

The protein resides in the nucleus. It catalyses the reaction O-phospho-L-tyrosyl-[protein] + H2O = L-tyrosyl-[protein] + phosphate. In terms of biological role, functions as a dosage-dependent inducer in mitotic control. Tyrosine protein phosphatase required for progression of the cell cycle. When phosphorylated, highly effective in activating G2 cells into prophase. Directly dephosphorylates CDK1 and activates its kinase activity. The protein is M-phase inducer phosphatase 3 (CDC25C) of Bos taurus (Bovine).